A 221-amino-acid chain; its full sequence is 7-carboxy-7-deazaguanine synthase (221 aa).

Residues 12-14 and arginine 27 each bind substrate; that span reads ING. In terms of domain architecture, Radical SAM core spans 18–216; that stretch reads KSGQLSVFIR…IQIHKIIWNP (199 aa). [4Fe-4S] cluster contacts are provided by cysteine 31, cysteine 35, and cysteine 38. Threonine 40 provides a ligand contact to Mg(2+). Threonine 73 contacts substrate. Glycine 75 is an S-adenosyl-L-methionine binding site.

The protein belongs to the radical SAM superfamily. 7-carboxy-7-deazaguanine synthase family. In terms of assembly, homodimer. [4Fe-4S] cluster serves as cofactor. Requires S-adenosyl-L-methionine as cofactor. It depends on Mg(2+) as a cofactor.

The catalysed reaction is 6-carboxy-5,6,7,8-tetrahydropterin + H(+) = 7-carboxy-7-deazaguanine + NH4(+). Its pathway is purine metabolism; 7-cyano-7-deazaguanine biosynthesis. In terms of biological role, catalyzes the complex heterocyclic radical-mediated conversion of 6-carboxy-5,6,7,8-tetrahydropterin (CPH4) to 7-carboxy-7-deazaguanine (CDG), a step common to the biosynthetic pathways of all 7-deazapurine-containing compounds. The polypeptide is 7-carboxy-7-deazaguanine synthase (Clostridium acetobutylicum (strain ATCC 824 / DSM 792 / JCM 1419 / IAM 19013 / LMG 5710 / NBRC 13948 / NRRL B-527 / VKM B-1787 / 2291 / W)).